We begin with the raw amino-acid sequence, 381 residues long: Putative 8-amino-7-oxononanoate synthase (381 aa).

Position 20 (arginine 20) interacts with substrate. 107 to 108 provides a ligand contact to pyridoxal 5'-phosphate; sequence GY. A substrate-binding site is contributed by histidine 132. Pyridoxal 5'-phosphate is bound by residues serine 180, 205–208, and 236–239; these read DEAH and TLSK. Residue lysine 239 is modified to N6-(pyridoxal phosphate)lysine. Substrate is bound at residue threonine 351.

Belongs to the class-II pyridoxal-phosphate-dependent aminotransferase family. BioF subfamily. As to quaternary structure, homodimer. The cofactor is pyridoxal 5'-phosphate.

It carries out the reaction 6-carboxyhexanoyl-[ACP] + L-alanine + H(+) = (8S)-8-amino-7-oxononanoate + holo-[ACP] + CO2. It functions in the pathway cofactor biosynthesis; biotin biosynthesis. Functionally, catalyzes the decarboxylative condensation of pimeloyl-[acyl-carrier protein] and L-alanine to produce 8-amino-7-oxononanoate (AON), [acyl-carrier protein], and carbon dioxide. The chain is Putative 8-amino-7-oxononanoate synthase (bioF) from Rippkaea orientalis (strain PCC 8801 / RF-1) (Cyanothece sp. (strain PCC 8801)).